The sequence spans 131 residues: MDEELQAIRQARLAQLQAEHGSAPSNIASGPSSNQQQQEVQDEMRQNLLSQILEHPARDRLRRIALVRKDRAEAVEELLLRMAKTGQISHKISEPELIELLEKISGEVSKRNETKIVINRRVQDDEDDWDL.

The tract at residues 15–43 (QLQAEHGSAPSNIASGPSSNQQQQEVQDE) is disordered. The segment covering 23–34 (APSNIASGPSSN) has biased composition (polar residues).

Belongs to the PDCD5 family.

This is an uncharacterized protein from Schizosaccharomyces pombe (strain 972 / ATCC 24843) (Fission yeast).